The following is a 224-amino-acid chain: Peptidyl-prolyl cis-trans isomerase FKBP3 (224 aa).

Ala2 carries the N-acetylalanine modification. Position 36 is a phosphoserine (Ser36). Residues 89 to 102 show a composition bias toward basic and acidic residues; the sequence is KLNEDKPKETKSEE. A disordered region spans residues 89–111; the sequence is KLNEDKPKETKSEETLDEGPPKY. The residue at position 99 (Lys99) is an N6-acetyllysine. Residues 128–224 form the PPIase FKBP-type domain; it reads GDVVHCWYTG…TFEVELVDID (97 aa). A Phosphoserine modification is found at Ser152. Residue Lys170 is modified to N6-acetyllysine.

The protein belongs to the FKBP-type PPIase family.

Its subcellular location is the nucleus. It catalyses the reaction [protein]-peptidylproline (omega=180) = [protein]-peptidylproline (omega=0). Its activity is regulated as follows. Inhibited preferentially by rapamycin over FK506. Functionally, FK506- and rapamycin-binding proteins (FKBPs) constitute a family of receptors for the two immunosuppressants which inhibit T-cell proliferation by arresting two distinct cytoplasmic signal transmission pathways. PPIases accelerate the folding of proteins. The protein is Peptidyl-prolyl cis-trans isomerase FKBP3 (FKBP3) of Homo sapiens (Human).